We begin with the raw amino-acid sequence, 513 residues long: DNA damage response protein kinase DUN1 (513 aa).

A compositionally biased stretch (basic and acidic residues) spans 1-12 (MSLSTKREHSGD). The segment at 1-29 (MSLSTKREHSGDVTDSSFKRQQRSNKPSS) is disordered. Serine 10 is subject to Phosphoserine. The FHA domain occupies 56 to 112 (TTIGRSRSCDVILSEPDISTFHAEFHLLQMDVDNFQRNLINVIDKSRNGTFINGNRL). Serine 139 is modified (phosphoserine). Residues 200-480 (YLLGKELGAG…IDEALNHPWF (281 aa)) form the Protein kinase domain. ATP is bound by residues 206 to 214 (LGAGHYALV) and lysine 229. The Proton acceptor role is filled by aspartate 328. Threonine 380 is modified (phosphothreonine).

It belongs to the protein kinase superfamily. CAMK Ser/Thr protein kinase family. CHEK2 subfamily. In terms of assembly, interacts with the PAB-dependent poly(A)-nuclease (PAN) complex regulatory subunit PAN3 via its forkhead-associated (FHA) domain. In terms of processing, autophosphorylation increases in response to DNA damage.

The protein localises to the nucleus. The catalysed reaction is L-seryl-[protein] + ATP = O-phospho-L-seryl-[protein] + ADP + H(+). The enzyme catalyses L-threonyl-[protein] + ATP = O-phospho-L-threonyl-[protein] + ADP + H(+). Functionally, transducer of the DNA damage signal. Phosphorylates SML1 on serine residues. Cooperates with the PAN deadenylation complex in the regulation of RAD5 mRNA levels and cell survival in response to replicational stress. This is DNA damage response protein kinase DUN1 (DUN1) from Saccharomyces cerevisiae (strain ATCC 204508 / S288c) (Baker's yeast).